A 622-amino-acid polypeptide reads, in one-letter code: MEGPGLGSQCRNHSHGPHPPGFGRYGICAHENKELANAREALPLIEDSSNCDIVKATQYGIFERCKELVEAGYDVRQPDKENVSLLHWAAINNRLDLVKFYISKGAVVDQLGGDLNSTPLHWAIRQGHLPMVILLLQHGADPTLIDGEGFSSIHLAVLFQHMPIIAYLISKGQSVNMTDVNGQTPLMLSAHKVIGPEPTGFLLKFNPSLNVVDKIHQNTPLHWAVAAGNVNAVDKLLEAGSSLDIQNVKGETPLDMALQNKNQLIIHMLKTEAKMRANQKFRLWRWLQKCELFLLLMLSVITMWAIGYILDFNSDSWLLKGCLLVTLFFLTSLFPRFLVGYKNLVYLPTAFLLSSVFWIFMTWFILFFPDLAGAPFYFSFIFSIVAFLYFFYKTWATDPGFTKASEEEKKVNIITLAETGSLDFRTFCTSCLIRKPLRSLHCHVCNCCVARYDQHCLWTGRCIGFGNHHYYIFFLFFLSMVCGWIIYGSFIYLSSHCATTFKEDGLWTYLNQIVACSPWVLYILMLATFHFSWSTFLLLNQLFQIAFLGLTSHERISLQKQSKHMKQTLSLRKTPYNLGFMQNLADFFQCGCFGLVKPCVVDWTSQYTMVFHPAREKVLRSV.

An N-acetylmethionine modification is found at Met1. Residues Met1–Glu291 lie on the Cytoplasmic side of the membrane. ANK repeat units follow at residues Pro43 to Pro78, Glu81 to Gln110, Leu115 to Leu144, Glu148 to Met177, Asn181 to Val211, His216 to Ile245, and Lys249 to Ala277. Residues Leu292–Phe312 traverse the membrane as a helical segment. Over Asn313 to Lys320 the chain is Lumenal. A helical membrane pass occupies residues Gly321–Tyr341. The Cytoplasmic segment spans residues Lys342–Leu347. The helical transmembrane segment at Pro348–Phe368 threads the bilayer. At Pro369–Asp370 the chain is on the lumenal side. The chain crosses the membrane as a helical span at residues Leu371 to Phe391. Over Tyr392–Tyr470 the chain is Cytoplasmic. The 51-residue stretch at Thr426 to Phe476 folds into the DHHC domain. The S-palmitoyl cysteine intermediate role is filled by Cys456. Residues Tyr471–Ile491 form a helical membrane-spanning segment. At Tyr492–Pro518 the chain is on the lumenal side. The chain crosses the membrane as a helical span at residues Trp519–Leu539. Over Asn540–Val622 the chain is Cytoplasmic.

The protein belongs to the DHHC palmitoyltransferase family. AKR/ZDHHC17 subfamily. Interacts (via ANK repeats) with CLIP3. Interacts (via ANK repeats) with DNAJC5 (via C-terminus). Interacts (via ANK repeats) with HTT. Interacts (via ANK repeats) with MAP6. Interacts (via ANK repeats) with SNAP23. Interacts (via ANK repeats) with SNAP25. May interact (via ANK repeats) with SPRED2.

It is found in the golgi apparatus membrane. The protein localises to the cytoplasmic vesicle membrane. The enzyme catalyses L-cysteinyl-[protein] + hexadecanoyl-CoA = S-hexadecanoyl-L-cysteinyl-[protein] + CoA. Its function is as follows. Palmitoyltransferase that could catalyze the addition of palmitate onto various protein substrates. Palmitoyltransferase for HTT and GAD2. May play a role in Mg(2+) transport. The polypeptide is Palmitoyltransferase ZDHHC13 (Homo sapiens (Human)).